Consider the following 199-residue polypeptide: MLVTLEGLDGSGKTTVWESLRASHDDGVTFTAEPTDSQYGQAVRRSESAADADPIAELFLFTADHADHLSRVVSPALDRGDVVISDRYSDSRYAYQGATLADTVPRAMEYVRGIHQPWTRPPDVTLYFDVDPDTGAARSGATNKFETAAFLADVRANYEQLIDYTPERFVRIDATQSPEAVIADAEAALADALPDDAWA.

7–14 lines the ATP pocket; sequence GLDGSGKT.

Belongs to the thymidylate kinase family.

The catalysed reaction is dTMP + ATP = dTDP + ADP. In Halobacterium salinarum (strain ATCC 29341 / DSM 671 / R1), this protein is Probable thymidylate kinase.